Consider the following 726-residue polypeptide: Catalase-peroxidase (726 aa).

The first 16 residues, 1–16 (MDNPTDSAGKCPVAHG), serve as a signal peptide directing secretion. The segment at 1-26 (MDNPTDSAGKCPVAHGNTPRSRSNRD) is disordered. A cross-link (tryptophyl-tyrosyl-methioninium (Trp-Tyr) (with M-244)) is located at residues 96–218 (WHSAGTYRIT…LGAVQMGLIY (123 aa)). H97 functions as the Proton acceptor in the catalytic mechanism. The segment at residues 218–244 (YVNPEGPNGTPDPLASARDIRETFARM) is a cross-link (tryptophyl-tyrosyl-methioninium (Tyr-Met) (with W-96)). H259 is a heme b binding site.

The protein belongs to the peroxidase family. Peroxidase/catalase subfamily. As to quaternary structure, homodimer or homotetramer. Heme b is required as a cofactor. Post-translationally, formation of the three residue Trp-Tyr-Met cross-link is important for the catalase, but not the peroxidase activity of the enzyme.

It catalyses the reaction H2O2 + AH2 = A + 2 H2O. The catalysed reaction is 2 H2O2 = O2 + 2 H2O. In terms of biological role, bifunctional enzyme with both catalase and broad-spectrum peroxidase activity. In Rhizobium johnstonii (strain DSM 114642 / LMG 32736 / 3841) (Rhizobium leguminosarum bv. viciae), this protein is Catalase-peroxidase.